Consider the following 888-residue polypeptide: MVPSPALVGTPSVFPHHQSTSFFQETASFFNLDWERLWHSRSNSNSTSSPRNSPSQLSPPMAATAALRRSSDYGSADTECGEPCETGAPVSLNEVDLLAKMEQLNKSNEEDSRSVASKKTGSSESRKGAREHSPEEDEYFQEDLWSVWGELILNWEIEVKKRPNYIKDLVKRGIPQHFRMIAWQNLSNASVSSVHDLYSDYMRQSSVYEKVIQRDIPRTYPELDFFKDGERGQSLLFNVIKAYSVHDKEVGYCQGSAFIVGLLLLQMPEEEAFAVLVSLMENYRLRELYKPTMTDLGLCMFQLECLVQDQMPDLYTHFNNMGFDTSMYASSWFLTLFTTTMPLDIANRIMDCFLVEGMDFIFCISIAILQQARIELLRLDMEGMLKYFQREVRERYEFDADLLFTVANQVQLNAKRMKRLEKDYLTKRTKEQEEAVELRRLRTENRLLRQRIDYLEAESSALADRLVKGQVNLAQEAENYINIAHELNKLRDMNSDVHRKLEGAYETIRELSSARRDNIMDTGTQVDDTSMIEHIHSLQQELIEAHTRQADSENTLRDAKLRVSELEMANKRLLENEPSEDVAGLQEELISVKMREAESSLALKEMRQRLAELEQHWAKYVHVRAFDPSSASIEKESTSEAHSTQQQPSPPLTSARARLAKITASLIGGSTEETDNCISVRELEDQLMGVRIKEADTLAELKEMRQKVMELETQNHVCTNQLKRQDEEMKRVREDSEVLVKKRKELEDQLKDEKEKLDNKESEFNEGRINDRLKYSEAMQTIQDLQSSISQLELKKAEKWTQNQLRGSSVCDLDEESNSHGSICSNVDHLSLASDEMNALLADMTVRIPTLDDLAEEGSATETDELRPKELNDGNDTTDSGVQLSDSH.

Low complexity predominate over residues 41 to 60 (RSNSNSTSSPRNSPSQLSPP). Disordered stretches follow at residues 41-87 (RSNS…CETG) and 104-135 (LNKSNEEDSRSVASKKTGSSESRKGAREHSPE). Residues 114–123 (SVASKKTGSS) are compositionally biased toward polar residues. The span at 124–133 (ESRKGAREHS) shows a compositional bias: basic and acidic residues. The 185-residue stretch at 173–357 (GIPQHFRMIA…RIMDCFLVEG (185 aa)) folds into the Rab-GAP TBC domain. Positions 631–654 (ASIEKESTSEAHSTQQQPSPPLTS) are disordered. Positions 694–770 (EADTLAELKE…ESEFNEGRIN (77 aa)) form a coiled coil. Residues 854 to 888 (LAEEGSATETDELRPKELNDGNDTTDSGVQLSDSH) form a disordered region. The segment covering 874–888 (GNDTTDSGVQLSDSH) has biased composition (polar residues).

In terms of assembly, may interact with rab-6.2 (in GTP-bound form). Highly expressed in the terminal bulb muscles, pharyngeal muscle, in intestine and vulva.

Functionally, rab GTPase activating protein for the small GTPase rab-6.2. Required for grinder formation, which is the feeding organ that breaks down food. This chain is Rab GTPase-activating protein eat-17, found in Caenorhabditis elegans.